A 255-amino-acid chain; its full sequence is GTP cyclohydrolase FolE2 (255 aa).

It belongs to the GTP cyclohydrolase IV family.

It carries out the reaction GTP + H2O = 7,8-dihydroneopterin 3'-triphosphate + formate + H(+). It functions in the pathway cofactor biosynthesis; 7,8-dihydroneopterin triphosphate biosynthesis; 7,8-dihydroneopterin triphosphate from GTP: step 1/1. Functionally, converts GTP to 7,8-dihydroneopterin triphosphate. The polypeptide is GTP cyclohydrolase FolE2 (Syntrophus aciditrophicus (strain SB)).